A 216-amino-acid polypeptide reads, in one-letter code: Urease accessory protein UreG (216 aa).

GTP is bound at residue 25–32 (GPVGSGKT).

This sequence belongs to the SIMIBI class G3E GTPase family. UreG subfamily. Homodimer. UreD, UreF and UreG form a complex that acts as a GTP-hydrolysis-dependent molecular chaperone, activating the urease apoprotein by helping to assemble the nickel containing metallocenter of UreC. The UreE protein probably delivers the nickel.

It is found in the cytoplasm. In terms of biological role, facilitates the functional incorporation of the urease nickel metallocenter. This process requires GTP hydrolysis, probably effectuated by UreG. This Burkholderia pseudomallei (strain 1710b) protein is Urease accessory protein UreG.